The primary structure comprises 413 residues: Synaptosomal-associated protein 47 (413 aa).

In terms of domain architecture, t-SNARE coiled-coil homology 1 spans 109–171 (AANIPSHVTR…DVADRLLTEL (63 aa)). Residues 321–342 (RHAASRPKGCTPHRELPTGGQE) are disordered. In terms of domain architecture, t-SNARE coiled-coil homology 2 spans 350 to 412 (KNLPLFSEGE…DKQNRRMRKL (63 aa)).

Belongs to the SVAP1 family. As to quaternary structure, associates with the BLOC-1 complex. Interacts with BLOC1S6. Forms a complex containing SNAP47, VAMP2 and STX1A. In terms of tissue distribution, ubiquitously expressed with the most abundant expression in the brain. In brain, most highly expressed in the glomerular layer of the olfactory bulb, the cortex, striatum, hippocampus, and colliculi (at protein level).

It localises to the endomembrane system. The protein resides in the cytoplasm. It is found in the perinuclear region. In terms of biological role, may play a role in intracellular membrane fusion. This chain is Synaptosomal-associated protein 47 (Snap47), found in Mus musculus (Mouse).